We begin with the raw amino-acid sequence, 110 residues long: MKYLVGCLCLAAICLSAGAQRKKVKCNLYMLKRSLVHYISRDRTGTRVMPCPPGTIFSEGHCGCVSLTNGCDMRPYSGRKYKHWIHGKWRTRYCPAGTTLNQSKCVCDHA.

Residues 1–19 form the signal peptide; sequence MKYLVGCLCLAAICLSAGA. The N-linked (GlcNAc...) asparagine glycan is linked to Asn101.

Component of the acid-soluble and acid-insoluble organic matrix of prismatic shell layers (at protein level).

The protein resides in the secreted. This is an uncharacterized protein from Haliotis asinina (Donkey's ear abalone).